Reading from the N-terminus, the 160-residue chain is Phosphopantetheine adenylyltransferase (160 aa).

Belongs to the eukaryotic CoaD family.

The protein resides in the cytoplasm. The catalysed reaction is (R)-4'-phosphopantetheine + ATP + H(+) = 3'-dephospho-CoA + diphosphate. It functions in the pathway cofactor biosynthesis; coenzyme A biosynthesis. Reversibly transfers an adenylyl group from ATP to 4'-phosphopantetheine, yielding dephospho-CoA (dPCoA) and pyrophosphate. This Pyrococcus furiosus (strain ATCC 43587 / DSM 3638 / JCM 8422 / Vc1) protein is Phosphopantetheine adenylyltransferase.